The primary structure comprises 434 residues: UDP-glucose 6-dehydrogenase (434 aa).

NAD(+) is bound by residues 2–19, Val11, Asp30, Lys35, Thr121, and Glu152; that span reads NITF…GIIM. Substrate-binding positions include 148-152, Lys204, Asn208, 249-253, and Gly257; these read EFLRE and FLNAG. The active-site Nucleophile is Cys260. NAD(+) is bound at residue Lys263. Lys321 provides a ligand contact to substrate. Arg328 provides a ligand contact to NAD(+).

Belongs to the UDP-glucose/GDP-mannose dehydrogenase family.

It carries out the reaction UDP-alpha-D-glucose + 2 NAD(+) + H2O = UDP-alpha-D-glucuronate + 2 NADH + 3 H(+). The protein operates within nucleotide-sugar biosynthesis; UDP-alpha-D-glucuronate biosynthesis; UDP-alpha-D-glucuronate from UDP-alpha-D-glucose: step 1/1. In Rickettsia typhi (strain ATCC VR-144 / Wilmington), this protein is UDP-glucose 6-dehydrogenase (udg).